We begin with the raw amino-acid sequence, 344 residues long: UDP-3-O-acylglucosamine N-acyltransferase (344 aa).

His-236 (proton acceptor) is an active-site residue.

This sequence belongs to the transferase hexapeptide repeat family. LpxD subfamily. As to quaternary structure, homotrimer.

It catalyses the reaction a UDP-3-O-[(3R)-3-hydroxyacyl]-alpha-D-glucosamine + a (3R)-hydroxyacyl-[ACP] = a UDP-2-N,3-O-bis[(3R)-3-hydroxyacyl]-alpha-D-glucosamine + holo-[ACP] + H(+). It participates in bacterial outer membrane biogenesis; LPS lipid A biosynthesis. Functionally, catalyzes the N-acylation of UDP-3-O-acylglucosamine using 3-hydroxyacyl-ACP as the acyl donor. Is involved in the biosynthesis of lipid A, a phosphorylated glycolipid that anchors the lipopolysaccharide to the outer membrane of the cell. The polypeptide is UDP-3-O-acylglucosamine N-acyltransferase (Nitratidesulfovibrio vulgaris (strain ATCC 29579 / DSM 644 / CCUG 34227 / NCIMB 8303 / VKM B-1760 / Hildenborough) (Desulfovibrio vulgaris)).